The primary structure comprises 342 residues: Adenylate isopentenyltransferase 6, chloroplastic (342 aa).

The N-terminal 33 residues, 1–33 (MQQLMTLLSPPLSHSSLLPTVTTKFGSPRLVTT), are a transit peptide targeting the chloroplast. 52–59 (GTTGTGKS) is a binding site for ATP.

The protein belongs to the IPP transferase family. In terms of tissue distribution, expressed in siliques, at the mRNA level.

It is found in the plastid. The protein resides in the chloroplast. The enzyme catalyses dimethylallyl diphosphate + ADP = N(6)-(dimethylallyl)adenosine 5'-diphosphate + diphosphate. It carries out the reaction dimethylallyl diphosphate + ATP = N(6)-(dimethylallyl)adenosine 5'-triphosphate + diphosphate. Functionally, involved in cytokinin biosynthesis. Catalyzes the transfer of an isopentenyl group from dimethylallyl diphosphate (DMAPP) to ATP and ADP. The sequence is that of Adenylate isopentenyltransferase 6, chloroplastic (IPT6) from Arabidopsis thaliana (Mouse-ear cress).